Here is a 260-residue protein sequence, read N- to C-terminus: NAD-capped RNA hydrolase NudC (260 aa).

Substrate-binding residues include K25 and R69. Zn(2+) is bound by residues C98 and C101. Residue E111 participates in substrate binding. The Zn(2+) site is built by C116 and C119. Position 124 (Y124) interacts with substrate. The Nudix hydrolase domain occupies P125–T248. Positions 158, 174, and 178 each coordinate a divalent metal cation. A Nudix box motif is present at residues G159–N180. Q192 to S199 contributes to the substrate binding site. A divalent metal cation is bound at residue E219. A241 contacts substrate.

The protein belongs to the Nudix hydrolase family. NudC subfamily. Homodimer. Requires Mg(2+) as cofactor. It depends on Mn(2+) as a cofactor. The cofactor is Zn(2+).

The enzyme catalyses a 5'-end NAD(+)-phospho-ribonucleoside in mRNA + H2O = a 5'-end phospho-adenosine-phospho-ribonucleoside in mRNA + beta-nicotinamide D-ribonucleotide + 2 H(+). The catalysed reaction is NAD(+) + H2O = beta-nicotinamide D-ribonucleotide + AMP + 2 H(+). It carries out the reaction NADH + H2O = reduced beta-nicotinamide D-ribonucleotide + AMP + 2 H(+). Functionally, mRNA decapping enzyme that specifically removes the nicotinamide adenine dinucleotide (NAD) cap from a subset of mRNAs by hydrolyzing the diphosphate linkage to produce nicotinamide mononucleotide (NMN) and 5' monophosphate mRNA. The NAD-cap is present at the 5'-end of some mRNAs and stabilizes RNA against 5'-processing. Has preference for mRNAs with a 5'-end purine. Catalyzes the hydrolysis of a broad range of dinucleotide pyrophosphates. The sequence is that of NAD-capped RNA hydrolase NudC from Yersinia pseudotuberculosis serotype O:1b (strain IP 31758).